Consider the following 134-residue polypeptide: Ribosome-binding factor A (134 aa).

The protein belongs to the RbfA family. As to quaternary structure, monomer. Binds 30S ribosomal subunits, but not 50S ribosomal subunits or 70S ribosomes.

It localises to the cytoplasm. One of several proteins that assist in the late maturation steps of the functional core of the 30S ribosomal subunit. Associates with free 30S ribosomal subunits (but not with 30S subunits that are part of 70S ribosomes or polysomes). Required for efficient processing of 16S rRNA. May interact with the 5'-terminal helix region of 16S rRNA. The protein is Ribosome-binding factor A of Synechococcus sp. (strain CC9311).